The chain runs to 128 residues: Glycine cleavage system H protein (128 aa).

Residues 22–104 (TALVGVTDYA…YASGWLVKIK (83 aa)) enclose the Lipoyl-binding domain. N6-lipoyllysine is present on K63.

It belongs to the GcvH family. The glycine cleavage system is composed of four proteins: P, T, L and H. The cofactor is (R)-lipoate.

The glycine cleavage system catalyzes the degradation of glycine. The H protein shuttles the methylamine group of glycine from the P protein to the T protein. The sequence is that of Glycine cleavage system H protein from Halothermothrix orenii (strain H 168 / OCM 544 / DSM 9562).